We begin with the raw amino-acid sequence, 485 residues long: Cobyric acid synthase (485 aa).

Positions 250-436 (RRIVACPILP…IHGLLASPAL (187 aa)) constitute a GATase cobBQ-type domain. Cysteine 332 functions as the Nucleophile in the catalytic mechanism. Residue histidine 428 is part of the active site.

The protein belongs to the CobB/CobQ family. CobQ subfamily.

The protein operates within cofactor biosynthesis; adenosylcobalamin biosynthesis. Catalyzes amidations at positions B, D, E, and G on adenosylcobyrinic A,C-diamide. NH(2) groups are provided by glutamine, and one molecule of ATP is hydrogenolyzed for each amidation. This Sphingopyxis alaskensis (strain DSM 13593 / LMG 18877 / RB2256) (Sphingomonas alaskensis) protein is Cobyric acid synthase.